The primary structure comprises 634 residues: RING finger protein 207 (634 aa).

The RING-type zinc-finger motif lies at Cys25 to Gln64. Residues Val93 to Leu145 form a B box-type; atypical zinc finger. The Zn(2+) site is built by Cys98, Cys101, Cys127, and His132. Coiled-coil stretches lie at residues Glu422–Ser457 and Glu494–Leu518. The interval Phe552–Thr634 is disordered.

In terms of assembly, interacts with the core-glycosylated, but not the fully glycosylated form of KCNH2/HERG. Interacts with DNAJA1 and HSPA8. Interacts (via the C-terminus) with HSPA1A; this interaction additively increases KCNH2 expression.

Its subcellular location is the cytoplasm. Its function is as follows. Plays a role in cardiac repolarization possibly by stabilizing membrane expression of the potassium channel KCNH2/HERG, or by assisting its synthesis, folding or export from the endoplasmic reticulum, in a heat shock protein-dependent manner. In Homo sapiens (Human), this protein is RING finger protein 207 (RNF207).